The chain runs to 118 residues: Small ribosomal subunit protein uS13 (118 aa).

The interval 94 to 118 (GLPVRGQRTKTNARTRKGPRKPIKK) is disordered.

It belongs to the universal ribosomal protein uS13 family. In terms of assembly, part of the 30S ribosomal subunit. Forms a loose heterodimer with protein S19. Forms two bridges to the 50S subunit in the 70S ribosome.

In terms of biological role, located at the top of the head of the 30S subunit, it contacts several helices of the 16S rRNA. In the 70S ribosome it contacts the 23S rRNA (bridge B1a) and protein L5 of the 50S subunit (bridge B1b), connecting the 2 subunits; these bridges are implicated in subunit movement. Contacts the tRNAs in the A and P-sites. In Tolumonas auensis (strain DSM 9187 / NBRC 110442 / TA 4), this protein is Small ribosomal subunit protein uS13.